The primary structure comprises 183 residues: MDEYKNIEEKMKKTVSVLKDELNTVRAGRANAAILDRITVDYYGVPTPINQLGTISVPEPRVIVIQPWDAQILKEIEKEIQKSDIGINPNNDGKVIRLVFPPLTEERRKELTKLAKKYGEDAKVAIRSIRRDGIEKKKAMKKNGEITEDDLKSAEKDIQNLTDKYIAEIDKLIEIKEKEILEV.

Belongs to the RRF family.

The protein resides in the cytoplasm. Its function is as follows. Responsible for the release of ribosomes from messenger RNA at the termination of protein biosynthesis. May increase the efficiency of translation by recycling ribosomes from one round of translation to another. The protein is Ribosome-recycling factor of Acetivibrio thermocellus (strain ATCC 27405 / DSM 1237 / JCM 9322 / NBRC 103400 / NCIMB 10682 / NRRL B-4536 / VPI 7372) (Clostridium thermocellum).